Consider the following 343-residue polypeptide: Protein RecA (343 aa).

Gly-64 to Thr-71 is an ATP binding site.

This sequence belongs to the RecA family.

The protein resides in the cytoplasm. Functionally, can catalyze the hydrolysis of ATP in the presence of single-stranded DNA, the ATP-dependent uptake of single-stranded DNA by duplex DNA, and the ATP-dependent hybridization of homologous single-stranded DNAs. It interacts with LexA causing its activation and leading to its autocatalytic cleavage. The sequence is that of Protein RecA from Bacillus thuringiensis (strain Al Hakam).